The primary structure comprises 379 residues: Putative 8-amino-7-oxononanoate synthase (379 aa).

Arginine 18 contacts substrate. Residue 106-107 (GY) coordinates pyridoxal 5'-phosphate. Residue histidine 130 participates in substrate binding. Pyridoxal 5'-phosphate-binding positions include serine 178, 204-207 (DEAH), and 235-238 (TFGK). Lysine 238 is subject to N6-(pyridoxal phosphate)lysine. Threonine 351 is a substrate binding site.

This sequence belongs to the class-II pyridoxal-phosphate-dependent aminotransferase family. BioF subfamily. In terms of assembly, homodimer. The cofactor is pyridoxal 5'-phosphate.

The enzyme catalyses 6-carboxyhexanoyl-[ACP] + L-alanine + H(+) = (8S)-8-amino-7-oxononanoate + holo-[ACP] + CO2. The protein operates within cofactor biosynthesis; biotin biosynthesis. In terms of biological role, catalyzes the decarboxylative condensation of pimeloyl-[acyl-carrier protein] and L-alanine to produce 8-amino-7-oxononanoate (AON), [acyl-carrier protein], and carbon dioxide. This is Putative 8-amino-7-oxononanoate synthase (bioF) from Haemophilus influenzae (strain 86-028NP).